Reading from the N-terminus, the 225-residue chain is MKLVVSVMPKSLEEAQEIDVSRYEEADIIEWRADFLAKDDILNVAPAIFEKFAGRELIFTLRTRQEGGEIELSDDEYVALIKEVAGFYQPDYIDFEYFSHKGKFEEMLEFPNLVLSYHNFEETPENMMEILSELTSLTPKVVKVSVMAHNEQDVLDLMNYTRGFKTLNPEQDFVTISMGKVGRISRIAADLTGSSWSFASQDMASAPGQISLSNMKKIQEILNEN.

3-dehydroquinate contacts are provided by residues Ser6, 30–32 (EWR), and Arg62. The active-site Proton donor/acceptor is the His118. Lys143 functions as the Schiff-base intermediate with substrate in the catalytic mechanism. 3-dehydroquinate contacts are provided by Arg186, Ser205, and Gln209.

This sequence belongs to the type-I 3-dehydroquinase family. As to quaternary structure, homodimer.

The enzyme catalyses 3-dehydroquinate = 3-dehydroshikimate + H2O. The protein operates within metabolic intermediate biosynthesis; chorismate biosynthesis; chorismate from D-erythrose 4-phosphate and phosphoenolpyruvate: step 3/7. Functionally, involved in the third step of the chorismate pathway, which leads to the biosynthesis of aromatic amino acids. Catalyzes the cis-dehydration of 3-dehydroquinate (DHQ) and introduces the first double bond of the aromatic ring to yield 3-dehydroshikimate. The sequence is that of 3-dehydroquinate dehydratase from Streptococcus sanguinis (strain SK36).